The sequence spans 90 residues: Putative large ribosomal subunit protein uL23c (90 aa).

The coded by first part of gene stretch occupies residues M1–E46. Residues M47 to T90 are coded by second part of gene.

The protein belongs to the universal ribosomal protein uL23 family. In terms of assembly, part of the 50S ribosomal subunit.

It localises to the plastid. Its subcellular location is the chloroplast. In terms of biological role, binds to 23S rRNA. The chain is Putative large ribosomal subunit protein uL23c (rpl23) from Spinacia oleracea (Spinach).